Consider the following 513-residue polypeptide: MTSYMLGIDIGTTSTKAVLFSENGDVVQKESIGYPLYTPDISTAEQNPEEIFQAVIHTTARITKQHPEKRISFISFSSAMHSVIAIDENDKPLTPCITWADNRSEGWAHKIKEELNGHEVYKRTGTPIHPMAPLSKIAWITNERKEIASKAKKYIGIKEYIFKQLFNEYVIDYSLASATGMMNLKGLDWDEEALRIAGITPDHLSKLVPTTEIFQHCSPEIAIQMGIDPETPFVIGASDGVLSNLGVNAIKKGEIAVTIGTSGAIRTIIDKPQTDEKGRIFCYALTDKHWVIGGPVNNGGIVLRWIRDEFASSEIETATRLGIDPYDVLTKIAQRVRPGSDGLLFHPYLAGERAPLWNPDVRGSFFGLTMSHKKEHMIRAALEGVIYNLYTVFLALTECMDGPVTRIQATGGFARSEVWRQMMSDIFESEVVVPESYESSCLGACILGLYATGKIDSFDAVSDMIGSTYRHTPIEDSAKEYRTLMPIFINLSRLLENQYTQIADYQRGLITHK.

ATP contacts are provided by residues K16, T261, G300, and 412–416 (GFARS).

It belongs to the FGGY kinase family.

It catalyses the reaction D-gluconate + ATP = 6-phospho-D-gluconate + ADP + H(+). It participates in carbohydrate acid metabolism; D-gluconate degradation. Its activity is regulated as follows. Catabolite repression by gluconate. This chain is Gluconokinase (gntK), found in Bacillus subtilis (strain 168).